Reading from the N-terminus, the 308-residue chain is Cyclin-D4-1 (308 aa).

The protein belongs to the cyclin family. Cyclin D subfamily. As to quaternary structure, interacts with CDKA-1, CDKB2-1, KRP4/ICK7, KRP5/ICK3, KRP6/ICK4 and KRP7/ICK5. In terms of tissue distribution, expressed in shoot apical meristem, leaf primordia vascular tissues and tapetum of anthers.

In terms of biological role, may activate cell cycle in the root apical meristem (RAM) and promote embryonic root (radicle) protrusion. This chain is Cyclin-D4-1 (CYCD4-1), found in Arabidopsis thaliana (Mouse-ear cress).